We begin with the raw amino-acid sequence, 424 residues long: Anaerobic glycerol-3-phosphate dehydrogenase subunit B (424 aa).

The protein belongs to the anaerobic G-3-P dehydrogenase subunit B family. Composed of a catalytic GlpA/B dimer and of membrane bound GlpC. FMN serves as cofactor.

It carries out the reaction a quinone + sn-glycerol 3-phosphate = dihydroxyacetone phosphate + a quinol. It participates in polyol metabolism; glycerol degradation via glycerol kinase pathway; glycerone phosphate from sn-glycerol 3-phosphate (anaerobic route): step 1/1. Conversion of glycerol 3-phosphate to dihydroxyacetone. Uses fumarate or nitrate as electron acceptor. The polypeptide is Anaerobic glycerol-3-phosphate dehydrogenase subunit B (Yersinia pseudotuberculosis serotype I (strain IP32953)).